The chain runs to 130 residues: Phosphoribosyl-AMP cyclohydrolase (130 aa).

Asp-74 contacts Mg(2+). Residue Cys-75 participates in Zn(2+) binding. Mg(2+)-binding residues include Asp-76 and Asp-78. Residues Cys-91 and Cys-98 each contribute to the Zn(2+) site.

The protein belongs to the PRA-CH family. In terms of assembly, homodimer. Requires Mg(2+) as cofactor. The cofactor is Zn(2+).

Its subcellular location is the cytoplasm. It carries out the reaction 1-(5-phospho-beta-D-ribosyl)-5'-AMP + H2O = 1-(5-phospho-beta-D-ribosyl)-5-[(5-phospho-beta-D-ribosylamino)methylideneamino]imidazole-4-carboxamide. It functions in the pathway amino-acid biosynthesis; L-histidine biosynthesis; L-histidine from 5-phospho-alpha-D-ribose 1-diphosphate: step 3/9. Its function is as follows. Catalyzes the hydrolysis of the adenine ring of phosphoribosyl-AMP. This chain is Phosphoribosyl-AMP cyclohydrolase, found in Bradyrhizobium sp. (strain ORS 278).